A 498-amino-acid polypeptide reads, in one-letter code: Galactose-1-phosphate uridylyltransferase (498 aa).

It belongs to the galactose-1-phosphate uridylyltransferase type 2 family.

The protein localises to the cytoplasm. It catalyses the reaction alpha-D-galactose 1-phosphate + UDP-alpha-D-glucose = alpha-D-glucose 1-phosphate + UDP-alpha-D-galactose. Its pathway is carbohydrate metabolism; galactose metabolism. The protein is Galactose-1-phosphate uridylyltransferase of Clostridium perfringens (strain 13 / Type A).